Reading from the N-terminus, the 277-residue chain is S-formylglutathione hydrolase FrmB (277 aa).

Active-site charge relay system residues include Ser-145, Asp-221, and His-254.

Belongs to the esterase D family.

It catalyses the reaction S-formylglutathione + H2O = formate + glutathione + H(+). Serine hydrolase involved in the detoxification of formaldehyde. Hydrolyzes S-formylglutathione to glutathione and formate. The chain is S-formylglutathione hydrolase FrmB (frmB) from Escherichia coli O1:K1 / APEC.